Here is an 859-residue protein sequence, read N- to C-terminus: DNA mismatch repair protein MutS (859 aa).

Residue 622–629 (GPNMGGKS) coordinates ATP.

It belongs to the DNA mismatch repair MutS family.

Functionally, this protein is involved in the repair of mismatches in DNA. It is possible that it carries out the mismatch recognition step. This protein has a weak ATPase activity. The protein is DNA mismatch repair protein MutS of Syntrophomonas wolfei subsp. wolfei (strain DSM 2245B / Goettingen).